Consider the following 294-residue polypeptide: Nucleotide-binding protein Daud_0300 (294 aa).

11-18 (GLSGAGKT) is a binding site for ATP. Position 62–65 (62–65 (DIRG)) interacts with GTP.

Belongs to the RapZ-like family.

Functionally, displays ATPase and GTPase activities. This Desulforudis audaxviator (strain MP104C) protein is Nucleotide-binding protein Daud_0300.